Reading from the N-terminus, the 502-residue chain is ATP synthase subunit alpha, sodium ion specific (502 aa).

Position 169-176 (169-176 (GDRQTGKT)) interacts with ATP.

The protein belongs to the ATPase alpha/beta chains family. In terms of assembly, F-type ATPases have 2 components, CF(1) - the catalytic core - and CF(0) - the membrane proton channel. CF(1) has five subunits: alpha(3), beta(3), gamma(1), delta(1), epsilon(1). CF(0) has three main subunits: a, b and c.

The protein resides in the cell membrane. The catalysed reaction is 4 Na(+)(in) + ATP + H2O = 4 Na(+)(out) + ADP + phosphate + H(+). Inhibited by nitrate. Its function is as follows. Produces ATP from ADP in the presence of a sodium ion gradient across the membrane. The alpha chain is a regulatory subunit. This chain is ATP synthase subunit alpha, sodium ion specific, found in Acetobacterium woodii (strain ATCC 29683 / DSM 1030 / JCM 2381 / KCTC 1655 / WB1).